Reading from the N-terminus, the 1058-residue chain is Bromodomain-containing protein 1 (1058 aa).

A compositionally biased stretch (basic residues) spans 1–12; sequence MRRKGRCHRGSA. The disordered stretch occupies residues 1–26; the sequence is MRRKGRCHRGSAARHPSSPCSVKHSP. Residues 31 to 80 form an interaction with KAT7/HBO1 and histones region; sequence LTYAQAQRMVEIEIEGRLHRISIFDPLEIILEDDLTAQEMSECNSNKENS. Residues 92 to 116 form a disordered region; that stretch reads HKNNRVKKKNEALPSAHGTPASASA. At Ser-128 the chain carries Phosphoserine. A PHD-type 1 zinc finger spans residues 214-264; sequence DAVCCICMDGECQNSNVILFCDMCNLAVHQECYGVPYIPEGQWLCRHCLQS. Residues 268–301 form a C2HC pre-PHD-type zinc finger; sequence PADCVLCPNKGGAFKKTDDDRWGHVVCALWIPEV. The segment at 325 to 389 adopts a PHD-type 2 zinc-finger fold; it reads LTCYLCKQKG…RKTAYCDVHT (65 aa). N6-acetyllysine occurs at positions 368, 516, and 519. Glycyl lysine isopeptide (Lys-Gly) (interchain with G-Cter in SUMO2) cross-links involve residues Lys-554 and Lys-594. One can recognise a Bromo domain in the interval 562–666; that stretch reads LRLTPLTVLL…DQGGVVLRQA (105 aa). Disordered regions lie at residues 755 to 776 and 791 to 868; these read LSQQ…EEDG and LETL…DSSF. Phosphoserine is present on Ser-803. A compositionally biased stretch (low complexity) spans 852–867; that stretch reads SESSISSSNSPLCDSS. At Lys-903 the chain carries N6-acetyllysine. Phosphoserine is present on Arg-906. Residues 929–1012 enclose the PWWP domain; sequence PLKVVWAKCS…KSKMVPLGID (84 aa). Residues Ser-1052 and Ser-1055 each carry the phosphoserine modification.

In terms of assembly, component of some HBO1 complex composed of KAT7/HBO1, MEAF6, ING4 and BRD1/BRPF2. Component of the MOZ/MORF complex composed at least of ING5, KAT6A, KAT6B, MEAF6 and one of BRPF1, BRD1/BRPF2 and BRPF3. Interacts (via PHD-type zinc finger domain) with unmodified histone H3. Interacts (via PWWP domain) with dimethylated and trimethylated 'Lys-79' on histone H3. In terms of tissue distribution, highly expressed in testis.

The protein resides in the nucleus. Its subcellular location is the chromosome. Functionally, scaffold subunit of various histone acetyltransferase (HAT) complexes, such as the MOZ/MORF and HBO1 complexes, that acts as a regulator of hematopoiesis. Plays a key role in HBO1 complex by directing KAT7/HBO1 specificity towards histone H3 'Lys-14' acetylation (H3K14ac), thereby promoting erythroid differentiation. The sequence is that of Bromodomain-containing protein 1 from Homo sapiens (Human).